The following is a 388-amino-acid chain: Meiotic driver wtf13 (388 aa).

The segment covering 1–29 has biased composition (basic and acidic residues); sequence MKNKDYPLRSSMDELSTKNDNEIDLEKGP. Residues 1-39 are disordered; it reads MKNKDYPLRSSMDELSTKNDNEIDLEKGPLPEYNSEDGS. A run of 9 helical transmembrane segments spans residues 89 to 109, 119 to 139, 152 to 172, 182 to 202, 207 to 227, 243 to 263, 267 to 287, 297 to 317, and 331 to 351; these read LLIS…CVNP, AFSV…FCFF, VTVI…AQCV, CVKV…VGLY, DLVV…FGCV, CSIS…IWTL, LFGL…TKGL, ATGY…LFFY, and FIGN…GGIG.

It belongs to the WTF family. Homomer. Forms protein aggregates. The two isoforms can interact with each other and with themselves. High sequence similarity is required for their interaction.

The protein resides in the spore membrane. It localises to the vacuole membrane. It is found in the ascus epiplasm. Its subcellular location is the cytoplasm. The protein localises to the endoplasmic reticulum membrane. Its function is as follows. Promotes unequal transmission of alleles from the parental zygote to progeny spores by acting as poison/antidote system where the poison and antidote proteins are produced from the same locus; the poison component is trans-acting and targets all spores within an ascus whereas the antidote component is spore-specific, leading to poisoning of all progeny that do not inherit the allele. Functionally, localizes isoform 2 to the vacuole thereby facilitating its degradation. In addition to suppressing isoform 2, also suppresses S.pombe strain FY29033 wtf18 isoform 2. In terms of biological role, forms toxic aggregates that disrupt spore maturation. The polypeptide is Meiotic driver wtf13 (Schizosaccharomyces pombe (strain 972 / ATCC 24843) (Fission yeast)).